The sequence spans 393 residues: Prokineticin receptor 1 (393 aa).

The Extracellular portion of the chain corresponds to 1–62 (METTMGFMDD…TNSRTFFAAK (62 aa)). N-linked (GlcNAc...) asparagine glycans are attached at residues Asn11, Asn14, and Asn36. A helical transmembrane segment spans residues 63-83 (IVIGMALVGIMLVCGIGNFIF). Residues 84-98 (IAALVRYKKLRNLTN) lie on the Cytoplasmic side of the membrane. The helical transmembrane segment at 99-119 (LLIANLAISDFLVAIVCCPFE) threads the bilayer. Over 120-146 (MDYYVVRQLSWEHGHVLCTSVNYLRTV) the chain is Extracellular. Cys137 and Cys217 are joined by a disulfide. The chain crosses the membrane as a helical span at residues 147–167 (SLYVSTNALLAIAIDRYLAIV). The Cytoplasmic portion of the chain corresponds to 168-180 (HPLRPRMKCQTAT). A helical transmembrane segment spans residues 181–201 (GLIALVWTVSILIAIPSAYFT). Residues 202–232 (TETVLVIVKSQEKIFCGQIWPVDQQLYYKSY) are Extracellular-facing. A helical transmembrane segment spans residues 233-253 (FLFIFGIEFVGPVVTMTLCYA). The Cytoplasmic portion of the chain corresponds to 254–282 (RISRELWFKAVPGFQTEQIRKRLRCRRKT). Residues 283–303 (VLVLMCILTAYVLCWAPFYGF) traverse the membrane as a helical segment. Over 304–322 (TIVRDFFPTVFVKEKHYLT) the chain is Extracellular. The chain crosses the membrane as a helical span at residues 323-343 (AFYIVECIAMSNSMINTLCFV). The Cytoplasmic segment spans residues 344 to 393 (TVKNDTVKYFKKIMLLHWKASYNGGKSSADLDLKTIGMPATEEVDCIRLK).

This sequence belongs to the G-protein coupled receptor 1 family. As to expression, localizes to glandular epithelium, stroma and vascular endothelial cells of first trimester decidua (at protein level). Up-regulated in first trimester decidua when compared with non-pregnant endometrium. Expressed in the stomach, throughout the small intestine, colon, rectum, thyroid gland, pituitary gland, salivary gland, adrenal gland, testis, ovary, brain, spleen, prostate and pancreas.

The protein resides in the cell membrane. Its function is as follows. Receptor for prokineticin 1. Exclusively coupled to the G(q) subclass of heteromeric G proteins. Activation leads to mobilization of calcium, stimulation of phosphoinositide turnover and activation of p44/p42 mitogen-activated protein kinase. May play a role during early pregnancy. The sequence is that of Prokineticin receptor 1 (PROKR1) from Homo sapiens (Human).